The following is a 510-amino-acid chain: 2,3-bisphosphoglycerate-independent phosphoglycerate mutase (510 aa).

Residues Asp-10 and Ser-60 each contribute to the Mn(2+) site. Ser-60 acts as the Phosphoserine intermediate in catalysis. Residues His-121, Arg-150 to Asp-151, Arg-182, Arg-188, Arg-252 to Arg-255, and Lys-325 each bind substrate. 5 residues coordinate Mn(2+): Asp-392, His-396, Asp-433, His-434, and His-451.

The protein belongs to the BPG-independent phosphoglycerate mutase family. Mn(2+) is required as a cofactor.

Its subcellular location is the plastid. The protein resides in the chloroplast. It catalyses the reaction (2R)-2-phosphoglycerate = (2R)-3-phosphoglycerate. Its pathway is carbohydrate degradation; glycolysis; pyruvate from D-glyceraldehyde 3-phosphate: step 3/5. Catalyzes the interconversion of 2-phosphoglycerate and 3-phosphoglycerate. In Gracilaria tenuistipitata var. liui (Red alga), this protein is 2,3-bisphosphoglycerate-independent phosphoglycerate mutase.